Here is a 249-residue protein sequence, read N- to C-terminus: MASQTILELWPSSSLEEVQTIIRAVYKQVLGNPHVMESERLVTAESQLCDRSITVREFVRSVAKSDFYRNRYFQSCAPYRFVELNFLHLLGRAPQDQREVSEHIVRTVAEGYDAEIDSYIDSSEYEAAFGENVVPYYRGRSSEANSKQVGFNRIFALDRGPAQIDSAVKSAQLVYAVATNSANAIKASSSTVIGSGTEKRFKILVQGSKFDSPRRISTTEYIVPASKMTPQIQRINRTSGKIVSITEIV.

Residues 2 to 166 enclose the PBS-linker domain; it reads ASQTILELWP…LDRGPAQIDS (165 aa). The region spanning 198–248 is the CpcD-like domain; that stretch reads EKRFKILVQGSKFDSPRRISTTEYIVPASKMTPQIQRINRTSGKIVSITEI.

Belongs to the phycobilisome linker protein family. In terms of assembly, the phycobilisome is a hemidiscoidal structure that is composed of two distinct substructures: a core complex and six rods radiating from the core.

The protein localises to the cellular thylakoid membrane. Functionally, rod linker protein, associated with phycoerythrin. Linker polypeptides determine the state of aggregation and the location of the disk-shaped phycobiliprotein units within the phycobilisome and modulate their spectroscopic properties in order to mediate a directed and optimal energy transfer. The polypeptide is Phycobilisome 27.9 kDa linker polypeptide, phycoerythrin-associated, rod (cpeD) (Microchaete diplosiphon (Fremyella diplosiphon)).